The following is a 117-amino-acid chain: UPF0122 protein Dred_2057 (117 aa).

Belongs to the UPF0122 family.

In terms of biological role, might take part in the signal recognition particle (SRP) pathway. This is inferred from the conservation of its genetic proximity to ftsY/ffh. May be a regulatory protein. The protein is UPF0122 protein Dred_2057 of Desulforamulus reducens (strain ATCC BAA-1160 / DSM 100696 / MI-1) (Desulfotomaculum reducens).